Reading from the N-terminus, the 390-residue chain is Olfactomedin-like protein 3A (390 aa).

Residues Met1–Ala17 form the signal peptide. Positions Gln18 to Asp91 form a coiled coil. The region spanning Asp130–Lys386 is the Olfactomedin-like domain. A disulfide bridge links Cys131 with Cys313. N-linked (GlcNAc...) asparagine glycosylation is present at Asn169.

This sequence belongs to the OLFML3 family.

It is found in the secreted. In terms of biological role, secreted scaffold protein that plays an essential role in dorsoventral patterning during early development. Stabilizes axial formation by restricting chordin (CHRD) activity on the dorsal side. Acts by facilitating the association between the tolloid proteases and their substrate chordin (CHRD), leading to enhance chordin (CHRD) degradation. The sequence is that of Olfactomedin-like protein 3A (olfml3a) from Danio rerio (Zebrafish).